Reading from the N-terminus, the 259-residue chain is 4-hydroxy-tetrahydrodipicolinate reductase (259 aa).

9-14 (GANGRM) contacts NAD(+). Arginine 37 lines the NADP(+) pocket. Residues 92-94 (GTT) and 116-119 (ASNM) contribute to the NAD(+) site. The Proton donor/acceptor role is filled by histidine 149. Position 150 (histidine 150) interacts with (S)-2,3,4,5-tetrahydrodipicolinate. Lysine 153 acts as the Proton donor in catalysis. 159–160 (GT) provides a ligand contact to (S)-2,3,4,5-tetrahydrodipicolinate.

It belongs to the DapB family.

The protein resides in the cytoplasm. It catalyses the reaction (S)-2,3,4,5-tetrahydrodipicolinate + NAD(+) + H2O = (2S,4S)-4-hydroxy-2,3,4,5-tetrahydrodipicolinate + NADH + H(+). The catalysed reaction is (S)-2,3,4,5-tetrahydrodipicolinate + NADP(+) + H2O = (2S,4S)-4-hydroxy-2,3,4,5-tetrahydrodipicolinate + NADPH + H(+). It participates in amino-acid biosynthesis; L-lysine biosynthesis via DAP pathway; (S)-tetrahydrodipicolinate from L-aspartate: step 4/4. Its function is as follows. Catalyzes the conversion of 4-hydroxy-tetrahydrodipicolinate (HTPA) to tetrahydrodipicolinate. The polypeptide is 4-hydroxy-tetrahydrodipicolinate reductase (Desulfovibrio desulfuricans (strain ATCC 27774 / DSM 6949 / MB)).